The following is a 564-amino-acid chain: Arginine--tRNA ligase (564 aa).

The 'HIGH' region signature appears at 122–132 (PNIAKPFSIGH).

Belongs to the class-I aminoacyl-tRNA synthetase family. In terms of assembly, monomer.

Its subcellular location is the cytoplasm. The enzyme catalyses tRNA(Arg) + L-arginine + ATP = L-arginyl-tRNA(Arg) + AMP + diphosphate. This is Arginine--tRNA ligase from Lactococcus lactis subsp. lactis (strain IL1403) (Streptococcus lactis).